The sequence spans 322 residues: Phosphatidylserine decarboxylase proenzyme (322 aa).

Active-site charge relay system; for autoendoproteolytic cleavage activity residues include Asp90, His147, and Ser254. The active-site Schiff-base intermediate with substrate; via pyruvic acid; for decarboxylase activity is the Ser254. Ser254 carries the post-translational modification Pyruvic acid (Ser); by autocatalysis.

The protein belongs to the phosphatidylserine decarboxylase family. PSD-B subfamily. Prokaryotic type I sub-subfamily. Heterodimer of a large membrane-associated beta subunit and a small pyruvoyl-containing alpha subunit. Pyruvate serves as cofactor. Post-translationally, is synthesized initially as an inactive proenzyme. Formation of the active enzyme involves a self-maturation process in which the active site pyruvoyl group is generated from an internal serine residue via an autocatalytic post-translational modification. Two non-identical subunits are generated from the proenzyme in this reaction, and the pyruvate is formed at the N-terminus of the alpha chain, which is derived from the carboxyl end of the proenzyme. The autoendoproteolytic cleavage occurs by a canonical serine protease mechanism, in which the side chain hydroxyl group of the serine supplies its oxygen atom to form the C-terminus of the beta chain, while the remainder of the serine residue undergoes an oxidative deamination to produce ammonia and the pyruvoyl prosthetic group on the alpha chain. During this reaction, the Ser that is part of the protease active site of the proenzyme becomes the pyruvoyl prosthetic group, which constitutes an essential element of the active site of the mature decarboxylase.

Its subcellular location is the cell membrane. The catalysed reaction is a 1,2-diacyl-sn-glycero-3-phospho-L-serine + H(+) = a 1,2-diacyl-sn-glycero-3-phosphoethanolamine + CO2. It functions in the pathway phospholipid metabolism; phosphatidylethanolamine biosynthesis; phosphatidylethanolamine from CDP-diacylglycerol: step 2/2. Functionally, catalyzes the formation of phosphatidylethanolamine (PtdEtn) from phosphatidylserine (PtdSer). In Shigella dysenteriae serotype 1 (strain Sd197), this protein is Phosphatidylserine decarboxylase proenzyme.